Reading from the N-terminus, the 492-residue chain is Protein nucleotidyltransferase YdiU (492 aa).

ATP is bound by residues Gly95, Gly97, Arg98, Lys118, Asp130, Gly131, Arg181, and Arg188. The active-site Proton acceptor is the Asp257. Positions 258 and 267 each coordinate Mg(2+). Residue Asp267 participates in ATP binding. Residues 466 to 475 (YDDQPEHAEY) show a composition bias toward basic and acidic residues. The segment at 466-492 (YDDQPEHAEYRQPPPPSEKPYQTFCGT) is disordered.

Belongs to the SELO family. It depends on Mg(2+) as a cofactor. Requires Mn(2+) as cofactor.

It catalyses the reaction L-seryl-[protein] + ATP = 3-O-(5'-adenylyl)-L-seryl-[protein] + diphosphate. The enzyme catalyses L-threonyl-[protein] + ATP = 3-O-(5'-adenylyl)-L-threonyl-[protein] + diphosphate. It carries out the reaction L-tyrosyl-[protein] + ATP = O-(5'-adenylyl)-L-tyrosyl-[protein] + diphosphate. The catalysed reaction is L-histidyl-[protein] + UTP = N(tele)-(5'-uridylyl)-L-histidyl-[protein] + diphosphate. It catalyses the reaction L-seryl-[protein] + UTP = O-(5'-uridylyl)-L-seryl-[protein] + diphosphate. The enzyme catalyses L-tyrosyl-[protein] + UTP = O-(5'-uridylyl)-L-tyrosyl-[protein] + diphosphate. In terms of biological role, nucleotidyltransferase involved in the post-translational modification of proteins. It can catalyze the addition of adenosine monophosphate (AMP) or uridine monophosphate (UMP) to a protein, resulting in modifications known as AMPylation and UMPylation. The sequence is that of Protein nucleotidyltransferase YdiU from Syntrophotalea carbinolica (strain DSM 2380 / NBRC 103641 / GraBd1) (Pelobacter carbinolicus).